We begin with the raw amino-acid sequence, 951 residues long: Protocadherin-20 (951 aa).

Residues 1–60 (MRGRGNARSSQALGVSWCPATWHPRLDMGRLHRPRSSTSYRNLPHLFLFFLFVGPFSCLG) form the signal peptide. Residues 61-890 (SYSRATELLY…VESVSCMPTL (830 aa)) are Extracellular-facing. Cadherin domains are found at residues 64 to 209 (RATE…APQF), 210 to 320 (PVSQ…CPLF), 321 to 535 (TDSQ…APIF), 536 to 639 (LQPL…SPRF), 640 to 742 (INKD…PPLV), and 746 to 863 (QSNM…EPEI). The N-linked (GlcNAc...) asparagine glycan is linked to Asn135. 2 N-linked (GlcNAc...) asparagine glycosylation sites follow: Asn326 and Asn332. 5 N-linked (GlcNAc...) asparagine glycosylation sites follow: Asn680, Asn748, Asn803, Asn844, and Asn849. A helical membrane pass occupies residues 891 to 911 (VALSVISLGSITLVTGMGIYI). Residues 912 to 951 (CLRKGEKHPREDENLEVQIPLKGKIDLHMRERKPMDISNI) are Cytoplasmic-facing.

It is found in the cell membrane. In terms of biological role, potential calcium-dependent cell-adhesion protein. This Homo sapiens (Human) protein is Protocadherin-20 (PCDH20).